Here is a 142-residue protein sequence, read N- to C-terminus: MKTFTAKPETVKREWFVVDAAGQTLGRLATEIASRLRGKHKPEYTPHVDTGDYIVVINAEQIRVTGAKSSDKMYYSHSGFPGGIKEINFEKLIAKAPERVIETAVKGMLPKNPLGRDMYRKLKVYAGAAHPHTAQQPQELKI.

It belongs to the universal ribosomal protein uL13 family. In terms of assembly, part of the 50S ribosomal subunit.

Its function is as follows. This protein is one of the early assembly proteins of the 50S ribosomal subunit, although it is not seen to bind rRNA by itself. It is important during the early stages of 50S assembly. This is Large ribosomal subunit protein uL13 from Pseudomonas putida (strain W619).